The chain runs to 273 residues: 5-deoxy-glucuronate isomerase (273 aa).

It belongs to the isomerase IolB family.

The catalysed reaction is 5-deoxy-D-glucuronate = 5-dehydro-2-deoxy-D-gluconate. It functions in the pathway polyol metabolism; myo-inositol degradation into acetyl-CoA; acetyl-CoA from myo-inositol: step 4/7. In terms of biological role, involved in the isomerization of 5-deoxy-glucuronate (5DG) to 5-dehydro-2-deoxy-D-gluconate (DKG or 2-deoxy-5-keto-D-gluconate). This Listeria monocytogenes serovar 1/2a (strain ATCC BAA-679 / EGD-e) protein is 5-deoxy-glucuronate isomerase.